The chain runs to 253 residues: RBPJ-interacting and tubulin-associated protein 1 (253 aa).

Disordered regions lie at residues 30 to 89 (SPAR…KNKY), 127 to 175 (TPPA…LCVP), and 188 to 253 (HLTV…PPWK). Polar residues predominate over residues 71-81 (SPSSRGSTPNL). The Nuclear localization signal motif lies at 81–97 (LTPRKKNKYRLIGHAPS). The tract at residues 112–140 (RMAVGDAAKLRTLFWTPPATPRGSHTPCP) is interaction with RBPJ/RBPSUH. The interval 140–253 (PRETPLRAIH…CPPKPKPPWK (114 aa)) is interaction with tubulin. Over residues 188 to 228 (HLTVPSTGHPASSAPQTNGPWSPRPNTSGATVQSPLVTSKA) the composition is skewed to polar residues.

The protein belongs to the RITA family. In terms of assembly, interacts with RBPJ/RBPSUH.

It localises to the cytoplasm. It is found in the nucleus. Its subcellular location is the cytoskeleton. The protein resides in the microtubule organizing center. The protein localises to the centrosome. Functionally, tubulin-binding protein that acts as a negative regulator of Notch signaling pathway. Shuttles between the cytoplasm and the nucleus and mediates the nuclear export of RBPJ/RBPSUH, thereby preventing the interaction between RBPJ/RBPSUH and NICD product of Notch proteins (Notch intracellular domain), leading to down-regulate Notch-mediated transcription. May play a role in neurogenesis. This Mus musculus (Mouse) protein is RBPJ-interacting and tubulin-associated protein 1 (Rita1).